The following is a 337-amino-acid chain: Fructose-1,6-bisphosphatase class 1 (337 aa).

The Mg(2+) site is built by glutamate 89, aspartate 112, leucine 114, and aspartate 115. Substrate is bound by residues aspartate 115–serine 118, asparagine 208, tyrosine 241, and lysine 271. A Mg(2+)-binding site is contributed by glutamate 277.

Belongs to the FBPase class 1 family. As to quaternary structure, homotetramer. It depends on Mg(2+) as a cofactor.

The protein localises to the cytoplasm. It carries out the reaction beta-D-fructose 1,6-bisphosphate + H2O = beta-D-fructose 6-phosphate + phosphate. The protein operates within carbohydrate biosynthesis; gluconeogenesis. The protein is Fructose-1,6-bisphosphatase class 1 of Yersinia pseudotuberculosis serotype O:1b (strain IP 31758).